We begin with the raw amino-acid sequence, 541 residues long: Sialate O-acetylesterase (541 aa).

The first 23 residues, 1–23 (MVSPGPVFGIVLLIIARVSRSAG), serve as a signal peptide directing secretion. N-linked (GlcNAc...) asparagine glycosylation is found at Asn-107, Asn-138, Asn-188, Asn-293, Asn-356, Asn-427, Asn-448, and Asn-462.

In terms of assembly, disulfide-linked heterodimer of a small subunit and a large subunit. The two subunits are derived from a single precursor by proteolytic cleavage. Post-translationally, the lysosomal isoform is glycosylated. In terms of tissue distribution, highly expressed in liver, testis, and kidney, whereas skeletal muscle, adipose tissue, and heart have lower levels. As to expression, highest expression in brain and ovary and lower levels in liver and thymus.

The protein resides in the lysosome. The protein localises to the cytoplasm. The catalysed reaction is N-acetyl-9-O-acetylneuraminate + H2O = N-acetylneuraminate + acetate + H(+). It catalyses the reaction an Ac-O-9-sialoglycoconjugate + H2O = a sialoglycoconjugate + acetate + H(+). Inhibited by diisopropyl fluorophosphate and diethyl-P-nitrophenyl phosphate. Catalyzes the removal of O-acetyl ester groups from position 9 of the free diacetylated sialate N-acetyl-9-O-acetylneuraminate (Neu5,9Ac2) in the cytosol and of the diacetylated sialate residues of sialylglycoconjugates in the lysosomes. Together with the sialate-O-acetyltransferase they regulate the balance of acetylated sialoglycoconjugates, key players in various processes such as cell-cell interactions, host-pathogen recognition, and tumor antigenicity. The chain is Sialate O-acetylesterase (Siae) from Mus musculus (Mouse).